The chain runs to 273 residues: L-cysteine S-thiosulfotransferase subunit SoxA (273 aa).

Residues 1–24 (MKKTVTAVALLCALSSTAIAPTFA) form the signal peptide. Cysteine 74 and cysteine 110 form a disulfide bridge. Positions 162–273 (EMYELGKRMF…GVMLTPGIKR (112 aa)) constitute a Cytochrome c domain. The heme site is built by cysteine 182 and histidine 186. Position 230 (arginine 230) interacts with substrate. Residue cysteine 234 participates in heme binding. The active-site Cysteine persulfide intermediate is the cysteine 234.

The protein belongs to the SoxA family. Heterodimer of SoxA and SoxX. Heme serves as cofactor. Post-translationally, cysteine persulfide at Cys-234.

It is found in the periplasm. The enzyme catalyses L-cysteinyl-[SoxY protein] + thiosulfate + 2 Fe(III)-[cytochrome c] = S-sulfosulfanyl-L-cysteinyl-[SoxY protein] + 2 Fe(II)-[cytochrome c] + 2 H(+). It carries out the reaction S-sulfanyl-L-cysteinyl-[SoxY protein] + thiosulfate + 2 Fe(III)-[cytochrome c] = S-(2-sulfodisulfanyl)-L-cysteinyl-[SoxY protein] + 2 Fe(II)-[cytochrome c] + 2 H(+). C-type monoheme cytochrome, which is part of the SoxAX cytochrome complex involved in sulfur oxidation. The SoxAX complex catalyzes the formation of a heterodisulfide bond between the conserved cysteine residue on a sulfur carrier SoxYZ complex subunit SoxY and thiosulfate or other inorganic sulfur substrates. This leads to the liberation of two electrons, which may be transferred from the SoxAX complex to another cytochrome c that then channels them into the respiratory electron transport chain. Some electrons may be used for reductive CO(2) fixation. In Hydrogenophilus thermoluteolus (Pseudomonas hydrogenothermophila), this protein is L-cysteine S-thiosulfotransferase subunit SoxA.